Reading from the N-terminus, the 351-residue chain is Fe(3+) ions import ATP-binding protein FbpC (351 aa).

Residues Val-7 to Met-237 form the ABC transporter domain. Residue Gly-39 to Thr-46 coordinates ATP.

It belongs to the ABC transporter superfamily. Fe(3+) ion importer (TC 3.A.1.10) family. As to quaternary structure, the complex is composed of two ATP-binding proteins (FbpC), two transmembrane proteins (FbpB) and a solute-binding protein (FbpA).

The protein localises to the cell inner membrane. It catalyses the reaction Fe(3+)(out) + ATP + H2O = Fe(3+)(in) + ADP + phosphate + H(+). In terms of biological role, part of the ABC transporter complex FbpABC involved in Fe(3+) ions import. Responsible for energy coupling to the transport system. This is Fe(3+) ions import ATP-binding protein FbpC from Vibrio cholerae serotype O1 (strain ATCC 39315 / El Tor Inaba N16961).